The primary structure comprises 128 residues: Phosphoribosyl-AMP cyclohydrolase (128 aa).

A Mg(2+)-binding site is contributed by Asp86. Cys87 contacts Zn(2+). Positions 88 and 90 each coordinate Mg(2+). Zn(2+)-binding residues include Cys103 and Cys110.

It belongs to the PRA-CH family. Homodimer. It depends on Mg(2+) as a cofactor. The cofactor is Zn(2+).

It localises to the cytoplasm. The enzyme catalyses 1-(5-phospho-beta-D-ribosyl)-5'-AMP + H2O = 1-(5-phospho-beta-D-ribosyl)-5-[(5-phospho-beta-D-ribosylamino)methylideneamino]imidazole-4-carboxamide. The protein operates within amino-acid biosynthesis; L-histidine biosynthesis; L-histidine from 5-phospho-alpha-D-ribose 1-diphosphate: step 3/9. Functionally, catalyzes the hydrolysis of the adenine ring of phosphoribosyl-AMP. The protein is Phosphoribosyl-AMP cyclohydrolase of Roseobacter denitrificans (strain ATCC 33942 / OCh 114) (Erythrobacter sp. (strain OCh 114)).